Here is a 355-residue protein sequence, read N- to C-terminus: UDP-N-acetylglucosamine--N-acetylmuramyl-(pentapeptide) pyrophosphoryl-undecaprenol N-acetylglucosamine transferase (355 aa).

UDP-N-acetyl-alpha-D-glucosamine contacts are provided by residues 15–17 (TGG), Asn127, Arg163, Ser191, Ile244, 263–268 (ALTVSE), and Gln288.

This sequence belongs to the glycosyltransferase 28 family. MurG subfamily.

Its subcellular location is the cell inner membrane. It carries out the reaction di-trans,octa-cis-undecaprenyl diphospho-N-acetyl-alpha-D-muramoyl-L-alanyl-D-glutamyl-meso-2,6-diaminopimeloyl-D-alanyl-D-alanine + UDP-N-acetyl-alpha-D-glucosamine = di-trans,octa-cis-undecaprenyl diphospho-[N-acetyl-alpha-D-glucosaminyl-(1-&gt;4)]-N-acetyl-alpha-D-muramoyl-L-alanyl-D-glutamyl-meso-2,6-diaminopimeloyl-D-alanyl-D-alanine + UDP + H(+). It functions in the pathway cell wall biogenesis; peptidoglycan biosynthesis. Cell wall formation. Catalyzes the transfer of a GlcNAc subunit on undecaprenyl-pyrophosphoryl-MurNAc-pentapeptide (lipid intermediate I) to form undecaprenyl-pyrophosphoryl-MurNAc-(pentapeptide)GlcNAc (lipid intermediate II). This is UDP-N-acetylglucosamine--N-acetylmuramyl-(pentapeptide) pyrophosphoryl-undecaprenol N-acetylglucosamine transferase from Salmonella enteritidis PT4 (strain P125109).